The following is a 122-amino-acid chain: Large ribosomal subunit protein uL14c (122 aa).

Belongs to the universal ribosomal protein uL14 family. Part of the 50S ribosomal subunit.

Its subcellular location is the plastid. Its function is as follows. Binds to 23S rRNA. The protein is Large ribosomal subunit protein uL14c of Euglena longa (Euglenophycean alga).